Consider the following 210-residue polypeptide: Thymidylate kinase (210 aa).

9 to 16 contributes to the ATP binding site; that stretch reads GLEGAGKS.

This sequence belongs to the thymidylate kinase family.

It carries out the reaction dTMP + ATP = dTDP + ADP. Phosphorylation of dTMP to form dTDP in both de novo and salvage pathways of dTTP synthesis. This is Thymidylate kinase from Aliivibrio fischeri (strain ATCC 700601 / ES114) (Vibrio fischeri).